Here is a 267-residue protein sequence, read N- to C-terminus: 14-3-3-like protein GF14 chi (267 aa).

Ala2 is modified (N-acetylalanine). 2 positions are modified to phosphoserine: Ser72 and Ser195. Thr216 carries the phosphothreonine modification. Residue Ser267 is modified to Phosphoserine.

Belongs to the 14-3-3 family. In terms of assembly, interacts with TPK1. Interacts with the isocitrate dehydrogenase IDH3, and malate dehydrogenases MDH1 and MDH2. Interacts with DREB1A and DREB1B in the nucleus. Interacts with CINV1.

It localises to the nucleus. The protein resides in the cytoplasm. Its function is as follows. Is associated with a DNA binding complex that binds to the G box, a well-characterized cis-acting DNA regulatory element found in plant genes. Involved in the regulation of nutrient metabolism. This Arabidopsis thaliana (Mouse-ear cress) protein is 14-3-3-like protein GF14 chi (GRF1).